Reading from the N-terminus, the 592-residue chain is Guanylate-binding protein 1 (592 aa).

The segment at 1–311 (MASEIHMTGP…NAISSGDLPC (311 aa)) is GTPase domain (Globular). In terms of domain architecture, GB1/RHD3-type G spans 35-278 (TQPMVVVAIV…FCSYIFSNSK (244 aa)). Residues 45–52 (GLYRTGKS), 67–69 (LGS), and 97–101 (DTEGL) contribute to the GTP site. Ser-156 carries the post-translational modification Phosphoserine. A Cysteine methyl ester modification is found at Cys-589. Cys-589 is lipidated: S-farnesyl cysteine. Thr-590 is subject to Phosphothreonine. Positions 590 to 592 (TIS) are cleaved as a propeptide — removed in mature form.

This sequence belongs to the TRAFAC class dynamin-like GTPase superfamily. GB1/RHD3 GTPase family. GB1 subfamily. Homodimer; homodimerization occurs upon GTP-binding and is required for the second hydrolysis step from GDP to GMP. Undergoes conformational changes and oligomerization upon GTP-binding and hydrolysis. Heterodimer with other family members, including GBP2, GBP3, GBP4 and GBP5. Dimerization regulates subcellular location to membranous structures. Interacts with SQSTM1. Interacts (when phosphorylated) with 14-3-3 protein sigma (SFN); leading to GBP1 retention in the cytosol and inactivation. Isoprenylation is required for proper subcellular location. In terms of processing, phosphorylated at Ser-156 by PIM1 in absence of infection, inhibits GBP1: phosphorylation promotes interaction with 14-3-3 protein sigma (SFN), leading to GBP1 retention in the cytosol. Dephosphorylated in response to infection, liberating GBP1.

It is found in the cytoplasmic vesicle membrane. It localises to the golgi apparatus membrane. Its subcellular location is the cell membrane. The protein localises to the cytoplasm. The protein resides in the cytosol. It is found in the secreted. The catalysed reaction is GTP + H2O = GDP + phosphate + H(+). It carries out the reaction GDP + H2O = GMP + phosphate + H(+). In terms of biological role, interferon (IFN)-inducible GTPase that plays important roles in innate immunity against a diverse range of bacterial, viral and protozoan pathogens. Hydrolyzes GTP to GMP in two consecutive cleavage reactions: GTP is first hydrolyzed to GDP and then to GMP in a processive manner. Following infection, recruited to the pathogen-containing vacuoles or vacuole-escaped bacteria and promotes both inflammasome assembly and autophagy. Acts as a positive regulator of inflammasome assembly by facilitating the detection of inflammasome ligands from pathogens. Involved in the lysis of pathogen-containing vacuoles, releasing pathogens into the cytosol. Following pathogen release in the cytosol, forms a protein coat in a GTPase-dependent manner that encapsulates pathogens and promotes the detection of ligands by pattern recognition receptors. Plays a key role in inflammasome assembly in response to infection by Gram-negative bacteria: following pathogen release in the cytosol, forms a protein coat that encapsulates Gram-negative bacteria and directly binds to lipopolysaccharide (LPS), disrupting the O-antigen barrier and unmasking lipid A that is that detected by the non-canonical inflammasome effector CASP4/CASP11. Also promotes recruitment of proteins that mediate bacterial cytolysis, leading to release double-stranded DNA (dsDNA) that activates the AIM2 inflammasome. Involved in autophagy by regulating bacteriolytic peptide generation via its interaction with ubiquitin-binding protein SQSTM1, which delivers monoubiquitinated proteins to autolysosomes for the generation of bacteriolytic peptides. Confers protection to several pathogens, including the bacterial pathogens L.monocytogenes and M.bovis BCG as well as the protozoan pathogen T.gondii. Exhibits antiviral activity against influenza virus. The protein is Guanylate-binding protein 1 (GBP1) of Pongo abelii (Sumatran orangutan).